We begin with the raw amino-acid sequence, 410 residues long: Arginine deiminase (410 aa).

The active-site Amidino-cysteine intermediate is the C399.

Belongs to the arginine deiminase family.

The protein localises to the cytoplasm. The enzyme catalyses L-arginine + H2O = L-citrulline + NH4(+). It functions in the pathway amino-acid degradation; L-arginine degradation via ADI pathway; carbamoyl phosphate from L-arginine: step 1/2. In Treponema denticola (strain ATCC 35405 / DSM 14222 / CIP 103919 / JCM 8153 / KCTC 15104), this protein is Arginine deiminase.